We begin with the raw amino-acid sequence, 390 residues long: Transposase for insertion sequence element IS256 in transposon Tn4001 (390 aa).

The protein belongs to the transposase mutator family.

Its function is as follows. Required for the transposition of the insertion element. This is Transposase for insertion sequence element IS256 in transposon Tn4001 from Enterococcus faecalis (strain ATCC 700802 / V583).